A 325-amino-acid chain; its full sequence is Probable tRNA pseudouridine synthase B (325 aa).

Asp-69 serves as the catalytic Nucleophile. The 76-residue stretch at 236 to 311 (LPKIVIKDSA…IAADIQRVMM (76 aa)) folds into the PUA domain.

This sequence belongs to the pseudouridine synthase TruB family. Type 2 subfamily.

The catalysed reaction is uridine(55) in tRNA = pseudouridine(55) in tRNA. Functionally, could be responsible for synthesis of pseudouridine from uracil-55 in the psi GC loop of transfer RNAs. The sequence is that of Probable tRNA pseudouridine synthase B from Archaeoglobus fulgidus (strain ATCC 49558 / DSM 4304 / JCM 9628 / NBRC 100126 / VC-16).